Consider the following 416-residue polypeptide: Pectin acetylesterase 10 (416 aa).

The first 20 residues, 1–20 (MRKLFLLGFIVAGLVLGNEA), serve as a signal peptide directing secretion. The N-linked (GlcNAc...) asparagine glycan is linked to Asn27. Catalysis depends on charge relay system residues Ser198, Asp294, and His361.

Belongs to the pectinacetylesterase family.

The protein localises to the secreted. Its subcellular location is the cell wall. Its function is as follows. Hydrolyzes acetyl esters in homogalacturonan regions of pectin. In type I primary cell wall, galacturonic acid residues of pectin can be acetylated at the O-2 and O-3 positions. Decreasing the degree of acetylation of pectin gels in vitro alters their physical properties. In Arabidopsis thaliana (Mouse-ear cress), this protein is Pectin acetylesterase 10.